The chain runs to 718 residues: Heat shock 70 kDa protein 6, chloroplastic (718 aa).

The transit peptide at 1–92 (MASSAAQIHV…IDLGTTNSAV (92 aa)) directs the protein to the chloroplast. Residues 671-718 (QSLYNQPGAGGPGAGPSPGGEGASSGDSSSSKGGDGDDVIDADFTDSQ) form a disordered region. Positions 678 to 693 (GAGGPGAGPSPGGEGA) are enriched in gly residues. The span at 706 to 718 (GDDVIDADFTDSQ) shows a compositional bias: acidic residues.

It belongs to the heat shock protein 70 (TC 1.A.33) family. DnaK subfamily. As to quaternary structure, interacts with geminivirus movement protein (MP).

The protein localises to the plastid. It localises to the chloroplast stroma. Acts redundantly with HSP70-7 in the thermotolerance of germinating seeds. Plays an important role in the protein precursor import into chloroplasts. In terms of biological role, in cooperation with other chaperones, Hsp70s are key components that facilitate folding of de novo synthesized proteins, assist translocation of precursor proteins into organelles, and are responsible for degradation of damaged protein under stress conditions. The chain is Heat shock 70 kDa protein 6, chloroplastic (HSP70-6) from Arabidopsis thaliana (Mouse-ear cress).